The sequence spans 89 residues: Small ribosomal subunit protein uS15 (89 aa).

The protein belongs to the universal ribosomal protein uS15 family. As to quaternary structure, part of the 30S ribosomal subunit. Forms a bridge to the 50S subunit in the 70S ribosome, contacting the 23S rRNA.

Its function is as follows. One of the primary rRNA binding proteins, it binds directly to 16S rRNA where it helps nucleate assembly of the platform of the 30S subunit by binding and bridging several RNA helices of the 16S rRNA. Functionally, forms an intersubunit bridge (bridge B4) with the 23S rRNA of the 50S subunit in the ribosome. The sequence is that of Small ribosomal subunit protein uS15 from Desulforapulum autotrophicum (strain ATCC 43914 / DSM 3382 / VKM B-1955 / HRM2) (Desulfobacterium autotrophicum).